A 635-amino-acid chain; its full sequence is Threonine--tRNA ligase (635 aa).

In terms of domain architecture, TGS spans 1-61; the sequence is MIQITLPDNS…DHDARLQIIT (61 aa). A catalytic region spans residues 242 to 533; it reads DHRKLGKELD…LIEHHAGALP (292 aa). Zn(2+)-binding residues include Cys333, His384, and His510.

It belongs to the class-II aminoacyl-tRNA synthetase family. Homodimer. Requires Zn(2+) as cofactor.

It localises to the cytoplasm. It carries out the reaction tRNA(Thr) + L-threonine + ATP = L-threonyl-tRNA(Thr) + AMP + diphosphate + H(+). Catalyzes the attachment of threonine to tRNA(Thr) in a two-step reaction: L-threonine is first activated by ATP to form Thr-AMP and then transferred to the acceptor end of tRNA(Thr). Also edits incorrectly charged L-seryl-tRNA(Thr). The sequence is that of Threonine--tRNA ligase from Variovorax paradoxus (strain S110).